The sequence spans 172 residues: uncharacterized protein (172 aa).

This is an uncharacterized protein from Saccharomyces cerevisiae (strain ATCC 204508 / S288c) (Baker's yeast).